Reading from the N-terminus, the 101-residue chain is Small ribosomal subunit protein uS14 (101 aa).

This sequence belongs to the universal ribosomal protein uS14 family. Part of the 30S ribosomal subunit. Contacts proteins S3 and S10.

In terms of biological role, binds 16S rRNA, required for the assembly of 30S particles and may also be responsible for determining the conformation of the 16S rRNA at the A site. The protein is Small ribosomal subunit protein uS14 of Chlamydia caviae (strain ATCC VR-813 / DSM 19441 / 03DC25 / GPIC) (Chlamydophila caviae).